The following is a 211-amino-acid chain: Probable transcription repressor protein RGM1 (211 aa).

The short motif at 6–11 (PKRNKD) is the Nuclear localization signal element. 2 C2H2-type zinc fingers span residues 19 to 44 (YRCV…IRKH) and 50 to 73 (FQCN…SSVH). The segment at 178 to 211 (NIVELPPDSSDTPASPSKVQSFDQAKDASPNAKK) is disordered. Residues 183–194 (PPDSSDTPASPS) show a composition bias toward low complexity.

Its subcellular location is the nucleus. This Saccharomyces cerevisiae (strain ATCC 204508 / S288c) (Baker's yeast) protein is Probable transcription repressor protein RGM1 (RGM1).